The chain runs to 215 residues: tRNA (guanine-N(7)-)-methyltransferase (215 aa).

S-adenosyl-L-methionine-binding residues include glutamate 43, glutamate 68, aspartate 95, and aspartate 117. Residue aspartate 117 is part of the active site. Substrate-binding positions include lysine 121, aspartate 153, and 190–193 (TEYE).

The protein belongs to the class I-like SAM-binding methyltransferase superfamily. TrmB family.

The enzyme catalyses guanosine(46) in tRNA + S-adenosyl-L-methionine = N(7)-methylguanosine(46) in tRNA + S-adenosyl-L-homocysteine. The protein operates within tRNA modification; N(7)-methylguanine-tRNA biosynthesis. Functionally, catalyzes the formation of N(7)-methylguanine at position 46 (m7G46) in tRNA. In Staphylococcus epidermidis (strain ATCC 35984 / DSM 28319 / BCRC 17069 / CCUG 31568 / BM 3577 / RP62A), this protein is tRNA (guanine-N(7)-)-methyltransferase.